The primary structure comprises 201 residues: Holliday junction branch migration complex subunit RuvA (201 aa).

A domain I region spans residues 1–63 (MISHFSGTVS…EESLTLYGFV (63 aa)). Residues 64–142 (EADDRDAFEL…ALAPRGASAS (79 aa)) are domain II. The interval 143-153 (GATHVAAPWRE) is flexible linker. The segment at 153–201 (EQVAEGLVGLGWSTKDAEKAVDKVVALKEADPAMSIGNLMRAALRSLAR) is domain III.

The protein belongs to the RuvA family. In terms of assembly, homotetramer. Forms an RuvA(8)-RuvB(12)-Holliday junction (HJ) complex. HJ DNA is sandwiched between 2 RuvA tetramers; dsDNA enters through RuvA and exits via RuvB. An RuvB hexamer assembles on each DNA strand where it exits the tetramer. Each RuvB hexamer is contacted by two RuvA subunits (via domain III) on 2 adjacent RuvB subunits; this complex drives branch migration. In the full resolvosome a probable DNA-RuvA(4)-RuvB(12)-RuvC(2) complex forms which resolves the HJ.

It is found in the cytoplasm. Functionally, the RuvA-RuvB-RuvC complex processes Holliday junction (HJ) DNA during genetic recombination and DNA repair, while the RuvA-RuvB complex plays an important role in the rescue of blocked DNA replication forks via replication fork reversal (RFR). RuvA specifically binds to HJ cruciform DNA, conferring on it an open structure. The RuvB hexamer acts as an ATP-dependent pump, pulling dsDNA into and through the RuvAB complex. HJ branch migration allows RuvC to scan DNA until it finds its consensus sequence, where it cleaves and resolves the cruciform DNA. This is Holliday junction branch migration complex subunit RuvA from Cutibacterium acnes (strain DSM 16379 / KPA171202) (Propionibacterium acnes).